Consider the following 247-residue polypeptide: Carboxy-S-adenosyl-L-methionine synthase (247 aa).

S-adenosyl-L-methionine is bound by residues tyrosine 40, 65–67 (GAS), 90–91 (DN), 122–123 (DI), asparagine 137, and arginine 204.

This sequence belongs to the class I-like SAM-binding methyltransferase superfamily. Cx-SAM synthase family. Homodimer.

The catalysed reaction is prephenate + S-adenosyl-L-methionine = carboxy-S-adenosyl-L-methionine + 3-phenylpyruvate + H2O. Functionally, catalyzes the conversion of S-adenosyl-L-methionine (SAM) to carboxy-S-adenosyl-L-methionine (Cx-SAM). The sequence is that of Carboxy-S-adenosyl-L-methionine synthase from Pseudomonas entomophila (strain L48).